The primary structure comprises 965 residues: UvrABC system protein A (965 aa).

32-39 (GLSGSGKS) provides a ligand contact to ATP. The C4-type zinc-finger motif lies at 254–281 (CPVCDYSLPELEPRLFSFNAPMGACPAC). 2 ABC transporter domains span residues 311–588 (WDRR…PRSL) and 608–937 (PNAT…HFLA). 641–648 (GVSGSGKS) provides a ligand contact to ATP. The C4-type zinc finger occupies 740–766 (CEACEGDGLIKVEMHFLPDVYVPCDVC).

It belongs to the ABC transporter superfamily. UvrA family. In terms of assembly, forms a heterotetramer with UvrB during the search for lesions.

The protein resides in the cytoplasm. Functionally, the UvrABC repair system catalyzes the recognition and processing of DNA lesions. UvrA is an ATPase and a DNA-binding protein. A damage recognition complex composed of 2 UvrA and 2 UvrB subunits scans DNA for abnormalities. When the presence of a lesion has been verified by UvrB, the UvrA molecules dissociate. The sequence is that of UvrABC system protein A from Xylella fastidiosa (strain 9a5c).